The following is a 98-amino-acid chain: NADH-ubiquinone oxidoreductase chain 4L (98 aa).

The next 3 membrane-spanning stretches (helical) occupy residues 1–21, 29–49, and 58–78; these read MPII…GMLI, SLLC…LMAL, and IVPI…LALL.

It belongs to the complex I subunit 4L family. In terms of assembly, core subunit of respiratory chain NADH dehydrogenase (Complex I) which is composed of 45 different subunits.

The protein localises to the mitochondrion inner membrane. The catalysed reaction is a ubiquinone + NADH + 5 H(+)(in) = a ubiquinol + NAD(+) + 4 H(+)(out). In terms of biological role, core subunit of the mitochondrial membrane respiratory chain NADH dehydrogenase (Complex I) which catalyzes electron transfer from NADH through the respiratory chain, using ubiquinone as an electron acceptor. Part of the enzyme membrane arm which is embedded in the lipid bilayer and involved in proton translocation. The chain is NADH-ubiquinone oxidoreductase chain 4L (MT-ND4L) from Colobus guereza (Mantled guereza).